Here is a 194-residue protein sequence, read N- to C-terminus: N-acetyltransferase (194 aa).

Residues 9–173 (PQVRPGIAED…GRYWDVRWYE (165 aa)) form the N-acetyltransferase domain.

Belongs to the acetyltransferase family. PAT/BAR subfamily.

This Streptomyces griseus protein is N-acetyltransferase (nat).